Reading from the N-terminus, the 96-residue chain is Tenecin-3 (96 aa).

The first 18 residues, 1–18 (MKTFVICLILVVAVSAAP), serve as a signal peptide directing secretion. The segment at 19 to 96 (DHHDGHLGGH…HQGGYKTHGH (78 aa)) is disordered. Repeat copies occupy residues 23 to 26 (GHLG), 31 to 34 (GHQG), 35 to 38 (GQQG), 39 to 42 (GHLG), 43 to 46 (GQQG), 47 to 50 (GHLG), 51 to 54 (GHQG), 59 to 62 (GHLG), 63 to 66 (GHQG), 67 to 70 (GIGG), 77 to 80 (GQHG), and 86 to 89 (GHQG). The 12 X 4 AA repeats of G-X-X-G stretch occupies residues 23 to 89 (GHLGGHQTGH…GPGTGAGHQG (67 aa)). Over residues 26 to 89 (GGHQTGHQGG…GPGTGAGHQG (64 aa)) the composition is skewed to gly residues.

It to H.diomphalia holotricin 3.

Its subcellular location is the secreted. Functionally, antifungal heat stable protein produced in response to injury. It is active against C.albicans. No antibacterial activity against Gram-positive and Gram-negative bacteria. The chain is Tenecin-3 from Tenebrio molitor (Yellow mealworm beetle).